Consider the following 282-residue polypeptide: NADPH-dependent 7-cyano-7-deazaguanine reductase (282 aa).

88-90 provides a ligand contact to substrate; that stretch reads IES. 90–91 is an NADPH binding site; the sequence is SK. Catalysis depends on cysteine 190, which acts as the Thioimide intermediate. Aspartate 197 functions as the Proton donor in the catalytic mechanism. Residue 229–230 coordinates substrate; the sequence is HE. 258–259 lines the NADPH pocket; it reads RG.

Belongs to the GTP cyclohydrolase I family. QueF type 2 subfamily. Homodimer.

The protein localises to the cytoplasm. It carries out the reaction 7-aminomethyl-7-carbaguanine + 2 NADP(+) = 7-cyano-7-deazaguanine + 2 NADPH + 3 H(+). The protein operates within tRNA modification; tRNA-queuosine biosynthesis. Functionally, catalyzes the NADPH-dependent reduction of 7-cyano-7-deazaguanine (preQ0) to 7-aminomethyl-7-deazaguanine (preQ1). In Escherichia coli (strain K12 / MC4100 / BW2952), this protein is NADPH-dependent 7-cyano-7-deazaguanine reductase.